The sequence spans 399 residues: Insertion element IS116 uncharacterized 44.8 kDa protein (399 aa).

The protein belongs to the transposase IS1111A/IS1328/IS1533 family.

The polypeptide is Insertion element IS116 uncharacterized 44.8 kDa protein (Streptomyces clavuligerus).